Reading from the N-terminus, the 261-residue chain is Cytochrome c oxidase subunit 3 (261 aa).

Residues 1–15 (MAHQAHAYHMVDPSP) are Mitochondrial matrix-facing. Residues 16 to 34 (WPITGATAALLVTSGLAAW) form a helical membrane-spanning segment. Topologically, residues 35–40 (FHFNSM) are mitochondrial intermembrane. A helical transmembrane segment spans residues 41–66 (ILILMGLTLLLLTMYQWWRDIIREST). At 67–72 (FQGHHT) the chain is on the mitochondrial matrix side. Residues 73–105 (LPVQKSLRYGMILFITSEVFFFLGFFWAFYHSS) traverse the membrane as a helical segment. The Mitochondrial intermembrane portion of the chain corresponds to 106 to 128 (LAPTPELGGLWPPTGITPLDPFE). A helical transmembrane segment spans residues 129–152 (VPLLNTAVLLASGITVTWAHHSLM). Residues 153–155 (EGQ) lie on the Mitochondrial matrix side of the membrane. Residues 156–183 (RKEAIQSLFITVLLGLYFTALQATEYYE) traverse the membrane as a helical segment. The Mitochondrial intermembrane segment spans residues 184–190 (SPFTIAD). Residues 191–223 (GAYGSTFFVATGFHGLHVIIGSTFLIVCLVRQT) form a helical membrane-spanning segment. Topologically, residues 224 to 232 (QYHFTSNHH) are mitochondrial matrix. Residues 233-256 (FGFEAAAWYWHFVDVVWLFLYVSI) traverse the membrane as a helical segment. Residues 257–261 (YWWGS) lie on the Mitochondrial intermembrane side of the membrane.

Belongs to the cytochrome c oxidase subunit 3 family. In terms of assembly, component of the cytochrome c oxidase (complex IV, CIV), a multisubunit enzyme composed of 14 subunits. The complex is composed of a catalytic core of 3 subunits MT-CO1, MT-CO2 and MT-CO3, encoded in the mitochondrial DNA, and 11 supernumerary subunits COX4I, COX5A, COX5B, COX6A, COX6B, COX6C, COX7A, COX7B, COX7C, COX8 and NDUFA4, which are encoded in the nuclear genome. The complex exists as a monomer or a dimer and forms supercomplexes (SCs) in the inner mitochondrial membrane with NADH-ubiquinone oxidoreductase (complex I, CI) and ubiquinol-cytochrome c oxidoreductase (cytochrome b-c1 complex, complex III, CIII), resulting in different assemblies (supercomplex SCI(1)III(2)IV(1) and megacomplex MCI(2)III(2)IV(2)).

Its subcellular location is the mitochondrion inner membrane. The enzyme catalyses 4 Fe(II)-[cytochrome c] + O2 + 8 H(+)(in) = 4 Fe(III)-[cytochrome c] + 2 H2O + 4 H(+)(out). Component of the cytochrome c oxidase, the last enzyme in the mitochondrial electron transport chain which drives oxidative phosphorylation. The respiratory chain contains 3 multisubunit complexes succinate dehydrogenase (complex II, CII), ubiquinol-cytochrome c oxidoreductase (cytochrome b-c1 complex, complex III, CIII) and cytochrome c oxidase (complex IV, CIV), that cooperate to transfer electrons derived from NADH and succinate to molecular oxygen, creating an electrochemical gradient over the inner membrane that drives transmembrane transport and the ATP synthase. Cytochrome c oxidase is the component of the respiratory chain that catalyzes the reduction of oxygen to water. Electrons originating from reduced cytochrome c in the intermembrane space (IMS) are transferred via the dinuclear copper A center (CU(A)) of subunit 2 and heme A of subunit 1 to the active site in subunit 1, a binuclear center (BNC) formed by heme A3 and copper B (CU(B)). The BNC reduces molecular oxygen to 2 water molecules using 4 electrons from cytochrome c in the IMS and 4 protons from the mitochondrial matrix. The polypeptide is Cytochrome c oxidase subunit 3 (MT-CO3) (Latimeria chalumnae (Coelacanth)).